Here is a 426-residue protein sequence, read N- to C-terminus: Histidine--tRNA ligase (426 aa).

This sequence belongs to the class-II aminoacyl-tRNA synthetase family. As to quaternary structure, homodimer.

It localises to the cytoplasm. The catalysed reaction is tRNA(His) + L-histidine + ATP = L-histidyl-tRNA(His) + AMP + diphosphate + H(+). The protein is Histidine--tRNA ligase of Streptococcus pyogenes serotype M3 (strain ATCC BAA-595 / MGAS315).